A 272-amino-acid chain; its full sequence is Sulfate transporter CysZ (272 aa).

A run of 4 helical transmembrane segments spans residues 29 to 49, 66 to 86, 148 to 168, and 219 to 239; these read FVIMPIVLNTILLCGLFWLFI, WLSFLSVILLTLSILTILLLF, IIALFLLSFIPLVGQTIVPVL, and FVPVINLLIMPVAVCGATLMW.

The protein belongs to the CysZ family.

Its subcellular location is the cell inner membrane. Functionally, high affinity, high specificity proton-dependent sulfate transporter, which mediates sulfate uptake. Provides the sulfur source for the cysteine synthesis pathway. The protein is Sulfate transporter CysZ of Haemophilus influenzae (strain PittGG).